The sequence spans 213 residues: Phospho-2-dehydro-3-deoxyheptonate aldolase, Tyr-sensitive (213 aa).

Belongs to the class-I DAHP synthase family.

The enzyme catalyses D-erythrose 4-phosphate + phosphoenolpyruvate + H2O = 7-phospho-2-dehydro-3-deoxy-D-arabino-heptonate + phosphate. It functions in the pathway metabolic intermediate biosynthesis; chorismate biosynthesis; chorismate from D-erythrose 4-phosphate and phosphoenolpyruvate: step 1/7. Functionally, stereospecific condensation of phosphoenolpyruvate (PEP) and D-erythrose-4-phosphate (E4P) giving rise to 3-deoxy-D-arabino-heptulosonate-7-phosphate (DAHP). The polypeptide is Phospho-2-dehydro-3-deoxyheptonate aldolase, Tyr-sensitive (aroF) (Enterobacter agglomerans (Erwinia herbicola)).